The sequence spans 217 residues: Somatotropin (217 aa).

Positions 1–27 are cleaved as a signal peptide; it reads MMAAGPRASLLLAFALLCLPWTQEVGA. Histidine 46 is a Zn(2+) binding site. An intrachain disulfide couples cysteine 79 to cysteine 190. Phosphoserine is present on serine 132. Position 199 (glutamate 199) interacts with Zn(2+). Cysteine 207 and cysteine 215 are joined by a disulfide.

This sequence belongs to the somatotropin/prolactin family.

The protein resides in the secreted. Functionally, plays an important role in growth control. Its major role in stimulating body growth is to stimulate the liver and other tissues to secrete IGF1. It stimulates both the differentiation and proliferation of myoblasts. It also stimulates amino acid uptake and protein synthesis in muscle and other tissues. The chain is Somatotropin (GH1) from Cervus elaphus (Red deer).